Reading from the N-terminus, the 338-residue chain is Glycerol-3-phosphate dehydrogenase [NAD(P)+] (338 aa).

NADPH-binding residues include Ser-13, Trp-14, and Lys-108. Residues Lys-108, Gly-139, and Ser-141 each contribute to the sn-glycerol 3-phosphate site. Ala-143 contributes to the NADPH binding site. Sn-glycerol 3-phosphate-binding residues include Lys-194, Asp-247, Ser-257, Arg-258, and Asn-259. The active-site Proton acceptor is Lys-194. NADPH is bound at residue Arg-258. Residues Val-282 and Glu-284 each contribute to the NADPH site.

It belongs to the NAD-dependent glycerol-3-phosphate dehydrogenase family.

It is found in the cytoplasm. It carries out the reaction sn-glycerol 3-phosphate + NAD(+) = dihydroxyacetone phosphate + NADH + H(+). The catalysed reaction is sn-glycerol 3-phosphate + NADP(+) = dihydroxyacetone phosphate + NADPH + H(+). Its pathway is membrane lipid metabolism; glycerophospholipid metabolism. Functionally, catalyzes the reduction of the glycolytic intermediate dihydroxyacetone phosphate (DHAP) to sn-glycerol 3-phosphate (G3P), the key precursor for phospholipid synthesis. This is Glycerol-3-phosphate dehydrogenase [NAD(P)+] from Streptococcus pneumoniae (strain P1031).